A 122-amino-acid polypeptide reads, in one-letter code: Neuropeptide B (122 aa).

A signal peptide spans 1–24 (MAGPAMLVAAALALCLLLASPGLA). Trp25 bears the 6'-bromotryptophan mark. Residues 56-122 (SEPRGGTRSL…LSLSASDCRK (67 aa)) constitute a propeptide that is removed on maturation.

Belongs to the neuropeptide B/W family.

The protein localises to the secreted. Functionally, may be involved in the regulation of feeding, neuroendocrine system, memory, learning and in the afferent pain pathway. The polypeptide is Neuropeptide B (NPB) (Bos taurus (Bovine)).